We begin with the raw amino-acid sequence, 522 residues long: E3 ubiquitin-protein ligase TRIM65 (522 aa).

A2 bears the N-acetylalanine mark. An RING-type zinc finger spans residues 13-52; that stretch reads CSICLGRYRDPVTLPCGHSFCGNCIQDSWRSCEKSCPECR. The B box-type zinc-finger motif lies at 92–134; it reads SHSARCLRHGRPLEFFCRTEGLCVCSACTVHDCSHHERALLDV. The stretch at 141–229 forms a coiled coil; that stretch reads DQLRARVLVT…QRLTDHLRAL (89 aa). Residue S187 is modified to Phosphoserine. The 194-residue stretch at 316-509 folds into the B30.2/SPRY domain; sequence APVPSAVCPL…LTLCHQPEAT (194 aa).

This sequence belongs to the TRIM/RBCC family. In terms of assembly, homo-multimerizes. Interacts with ARRDC4.

The protein localises to the cytoplasm. It carries out the reaction S-ubiquitinyl-[E2 ubiquitin-conjugating enzyme]-L-cysteine + [acceptor protein]-L-lysine = [E2 ubiquitin-conjugating enzyme]-L-cysteine + N(6)-ubiquitinyl-[acceptor protein]-L-lysine.. It functions in the pathway protein modification; protein ubiquitination. E3 ubiquitin ligase that plays a role in several processes including innate immnity, autophagy or inflammation. Negatively regulates miRNAs by modulating the ubiquitination and stability of TNRC6A, a protein involved in RNA-mediated gene silencing by both micro-RNAs (miRNAs) and short interfering RNAs. This ubiquitination results in the suppressed expression of miR-138-5p leading to increased autophagy. Upon enteroviral infection, promotes 'Lys-63'-mediated ubiquitination activation of IFIH1/MDA5 leading to innate signaling cascade. Mechanistically, selectively recognizes MDA5 filaments that occur on dsRNAs. Also plays a role in limitation of inflammation through different mechanisms. First, promotes 'Lys-48'-mediated ubiquitination of VCAM1 leading to its degradation and limitation of LPS-induced lung inflammation. In addition, negatively regulates inflammasome activation by promoting 'lys48'-linked ubiquitination of NLRP3 which is critical for the inhibition of NLRP3 inflammasome activation in resting macrophages. The protein is E3 ubiquitin-protein ligase TRIM65 (Trim65) of Mus musculus (Mouse).